The following is a 348-amino-acid chain: LRP2-binding protein (348 aa).

The stretch at 60–93 (TLAYFLRGQLYFEEGWYEEALEQFEEIEEKDHQA) is one TPR repeat. Sel1-like repeat units follow at residues 94–126 (TYQL…DSPC), 134–169 (FAAA…DNGN), 174–207 (VKAQ…GNGN), 208–243 (LESQ…ERGN), 244–278 (VYAQ…EVHD), and 298–333 (AMAS…RLNP).

As to quaternary structure, interacts with LRP2.

It is found in the cytoplasm. Functionally, may act as an adapter that regulates LRP2 function. The chain is LRP2-binding protein (LRP2BP) from Macaca fascicularis (Crab-eating macaque).